The chain runs to 364 residues: Phosphoserine aminotransferase (364 aa).

Arg46 lines the L-glutamate pocket. Pyridoxal 5'-phosphate contacts are provided by residues 80 to 81, Trp106, Thr157, Asp176, and Gln199; that span reads AR. Residue Lys200 is modified to N6-(pyridoxal phosphate)lysine. 241–242 serves as a coordination point for pyridoxal 5'-phosphate; the sequence is NT.

Belongs to the class-V pyridoxal-phosphate-dependent aminotransferase family. SerC subfamily. In terms of assembly, homodimer. Pyridoxal 5'-phosphate is required as a cofactor.

The protein localises to the cytoplasm. The enzyme catalyses O-phospho-L-serine + 2-oxoglutarate = 3-phosphooxypyruvate + L-glutamate. The catalysed reaction is 4-(phosphooxy)-L-threonine + 2-oxoglutarate = (R)-3-hydroxy-2-oxo-4-phosphooxybutanoate + L-glutamate. It participates in amino-acid biosynthesis; L-serine biosynthesis; L-serine from 3-phospho-D-glycerate: step 2/3. The protein operates within cofactor biosynthesis; pyridoxine 5'-phosphate biosynthesis; pyridoxine 5'-phosphate from D-erythrose 4-phosphate: step 3/5. Functionally, catalyzes the reversible conversion of 3-phosphohydroxypyruvate to phosphoserine and of 3-hydroxy-2-oxo-4-phosphonooxybutanoate to phosphohydroxythreonine. The polypeptide is Phosphoserine aminotransferase (Vibrio vulnificus (strain YJ016)).